The following is a 150-amino-acid chain: Large ribosomal subunit protein bL9 (150 aa).

The protein belongs to the bacterial ribosomal protein bL9 family.

Its function is as follows. Binds to the 23S rRNA. The chain is Large ribosomal subunit protein bL9 from Neisseria gonorrhoeae.